A 794-amino-acid chain; its full sequence is Lon protease (794 aa).

In terms of domain architecture, Lon N-terminal spans 13 to 204 (VPLYPLREII…KVYMHLTNEV (192 aa)). 356–363 (GPPGVGKT) provides a ligand contact to ATP. In terms of domain architecture, Lon proteolytic spans 592 to 773 (KDRVGVATGL…REVFVQALNP (182 aa)). Active-site residues include S679 and K722. Positions 774 to 788 (TSPAPTAATSARTPA) are enriched in low complexity. The segment at 774–794 (TSPAPTAATSARTPAGAPPPQ) is disordered.

This sequence belongs to the peptidase S16 family. Homohexamer. Organized in a ring with a central cavity.

It localises to the cytoplasm. The enzyme catalyses Hydrolysis of proteins in presence of ATP.. In terms of biological role, ATP-dependent serine protease that mediates the selective degradation of mutant and abnormal proteins as well as certain short-lived regulatory proteins. Required for cellular homeostasis and for survival from DNA damage and developmental changes induced by stress. Degrades polypeptides processively to yield small peptide fragments that are 5 to 10 amino acids long. Binds to DNA in a double-stranded, site-specific manner. The sequence is that of Lon protease from Citrifermentans bemidjiense (strain ATCC BAA-1014 / DSM 16622 / JCM 12645 / Bem) (Geobacter bemidjiensis).